Here is a 364-residue protein sequence, read N- to C-terminus: Uroporphyrinogen decarboxylase (364 aa).

Residues 28–32 (RQAGR), Phe-47, Asp-78, Tyr-158, Thr-213, and His-334 each bind substrate.

It belongs to the uroporphyrinogen decarboxylase family. As to quaternary structure, homodimer.

It localises to the cytoplasm. It catalyses the reaction uroporphyrinogen III + 4 H(+) = coproporphyrinogen III + 4 CO2. It functions in the pathway porphyrin-containing compound metabolism; protoporphyrin-IX biosynthesis; coproporphyrinogen-III from 5-aminolevulinate: step 4/4. Functionally, catalyzes the decarboxylation of four acetate groups of uroporphyrinogen-III to yield coproporphyrinogen-III. This is Uroporphyrinogen decarboxylase from Ralstonia nicotianae (strain ATCC BAA-1114 / GMI1000) (Ralstonia solanacearum).